The primary structure comprises 565 residues: Mitochondrial distribution and morphology protein 34 (565 aa).

Residues 1-208 (MAFNFNWSPL…VPEYRDRESE (208 aa)) form the SMP-LTD domain. Over residues 209 to 220 (SVNTLDLSSESG) the composition is skewed to polar residues. Disordered regions lie at residues 209-241 (SVNTLDLSSESGPGQDPLASPPQDPVDASGNAL), 347-463 (FGSY…SRSA), and 533-565 (MQEQKIDPSGSRPFPDFWDDHSREEIPPPAYGH). Positions 353 to 367 (PGRHSRSHTKKRKKR) are enriched in basic residues. The segment covering 368-378 (VVDLRRPKTTD) has biased composition (basic and acidic residues). The segment covering 382 to 391 (SVSGDSVFSS) has biased composition (low complexity). Polar residues-rich tracts occupy residues 392 to 402 (ENATSAPTIFS) and 439 to 463 (QGDQTLRRSNLSMSEAAQPSSSRSA).

This sequence belongs to the MDM34 family. Component of the ER-mitochondria encounter structure (ERMES) or MDM complex, composed of mmm1, mdm10, mdm12 and mdm34.

The protein localises to the mitochondrion outer membrane. Its function is as follows. Component of the ERMES/MDM complex, which serves as a molecular tether to connect the endoplasmic reticulum (ER) and mitochondria. Components of this complex are involved in the control of mitochondrial shape and protein biogenesis, and function in nonvesicular lipid trafficking between the ER and mitochondria. Mdm34 is required for the interaction of the ER-resident membrane protein mmm1 and the outer mitochondrial membrane-resident beta-barrel protein mdm10. The chain is Mitochondrial distribution and morphology protein 34 from Talaromyces marneffei (strain ATCC 18224 / CBS 334.59 / QM 7333) (Penicillium marneffei).